The sequence spans 321 residues: Lactamase-like protein notP (321 aa).

4 residues coordinate Zn(2+): His108, His110, Asp112, and His113. The active-site Proton donor/acceptor is Asp112.

It belongs to the metallo-beta-lactamase superfamily. Zn(2+) is required as a cofactor.

In terms of biological role, lactamase-like protein; part of the gene cluster that mediates the biosynthesis of notoamide, a fungal indole alkaloid that belongs to a family of natural products containing a characteristic bicyclo[2.2.2]diazaoctane core. The first step of notoamide biosynthesis involves coupling of L-proline and L-tryptophan by the bimodular NRPS notE, to produce cyclo-L-tryptophan-L-proline called brevianamide F. The reverse prenyltransferase notF then acts as a deoxybrevianamide E synthase and converts brevianamide F to deoxybrevianamide E via reverse prenylation at C-2 of the indole ring leading to the bicyclo[2.2.2]diazaoctane core. Deoxybrevianamide E is further hydroxylated at C-6 of the indole ring, likely catalyzed by the cytochrome P450 monooxygenase notG, to yield 6-hydroxy-deoxybrevianamide E. 6-hydroxy-deoxybrevianamide E is a specific substrate of the prenyltransferase notC for normal prenylation at C-7 to produce 6-hydroxy-7-prenyl-deoxybrevianamide, also called notoamide S. As the proposed pivotal branching point in notoamide biosynthesis, notoamide S can be diverted to notoamide E through an oxidative pyran ring closure putatively catalyzed by either notH cytochrome P450 monooxygenase or the notD FAD-linked oxidoreductase. This step would be followed by an indole 2,3-epoxidation-initiated pinacol-like rearrangement catalyzed by the notB FAD-dependent monooxygenase leading to the formation of notoamide C and notoamide D. On the other hand notoamide S is converted to notoamide T by notH (or notD), a bifunctional oxidase that also functions as the intramolecular Diels-Alderase responsible for generation of (+)-notoamide T. To generate antipodal (-)-notoaminide T, notH' (or notD') in Aspergillus versicolor is expected to catalyze a Diels-Alder reaction leading to the opposite stereochemistry. The remaining oxidoreductase notD (or notH) likely catalyzes the oxidative pyran ring formation to yield (+)-stephacidin A. The FAD-dependent monooxygenase notI is highly similar to notB and is predicted to catalyze a similar conversion from (+)-stephacidin A to (-)-notoamide B via the 2,3-epoxidation of (+)-stephacidin A followed by a pinacol-type rearrangement. Finally, it remains unclear which enzyme could be responsible for the final hydroxylation steps leading to notoamide A and sclerotiamide. The function of notP in the notoamide biosynthesis has not been determined yet. The sequence is that of Lactamase-like protein notP from Aspergillus sp. (strain MF297-2).